Consider the following 657-residue polypeptide: Glycogen debranching enzyme (657 aa).

The Nucleophile role is filled by Asp-336. Catalysis depends on Glu-371, which acts as the Proton donor. The disordered stretch occupies residues 460 to 481; the sequence is ANGEENRDGTNNNYSNNHGKEG.

It belongs to the glycosyl hydrolase 13 family.

The catalysed reaction is Hydrolysis of (1-&gt;6)-alpha-D-glucosidic linkages to branches with degrees of polymerization of three or four glucose residues in limit dextrin.. The protein operates within glycan degradation; glycogen degradation. In terms of biological role, removes maltotriose and maltotetraose chains that are attached by 1,6-alpha-linkage to the limit dextrin main chain, generating a debranched limit dextrin. The polypeptide is Glycogen debranching enzyme (Escherichia coli O157:H7).